The following is a 395-amino-acid chain: ATP phosphoribosyltransferase regulatory subunit (395 aa).

The protein belongs to the class-II aminoacyl-tRNA synthetase family. HisZ subfamily. As to quaternary structure, heteromultimer composed of HisG and HisZ subunits.

The protein localises to the cytoplasm. It functions in the pathway amino-acid biosynthesis; L-histidine biosynthesis; L-histidine from 5-phospho-alpha-D-ribose 1-diphosphate: step 1/9. Required for the first step of histidine biosynthesis. May allow the feedback regulation of ATP phosphoribosyltransferase activity by histidine. In Pseudomonas fluorescens (strain ATCC BAA-477 / NRRL B-23932 / Pf-5), this protein is ATP phosphoribosyltransferase regulatory subunit.